The following is a 449-amino-acid chain: CCA-adding enzyme (449 aa).

S53 and K56 together coordinate ATP. CTP-binding residues include S53 and K56. The Mg(2+) site is built by D65, D67, and D119. ATP contacts are provided by H142, K161, and Y170. Positions 142, 161, and 170 each coordinate CTP.

Belongs to the tRNA nucleotidyltransferase/poly(A) polymerase family. Archaeal CCA-adding enzyme subfamily. In terms of assembly, homodimer. Requires Mg(2+) as cofactor.

It carries out the reaction a tRNA precursor + 2 CTP + ATP = a tRNA with a 3' CCA end + 3 diphosphate. It catalyses the reaction a tRNA with a 3' CCA end + 2 CTP + ATP = a tRNA with a 3' CCACCA end + 3 diphosphate. Functionally, catalyzes the addition and repair of the essential 3'-terminal CCA sequence in tRNAs without using a nucleic acid template. Adds these three nucleotides in the order of C, C, and A to the tRNA nucleotide-73, using CTP and ATP as substrates and producing inorganic pyrophosphate. tRNA 3'-terminal CCA addition is required both for tRNA processing and repair. Also involved in tRNA surveillance by mediating tandem CCA addition to generate a CCACCA at the 3' terminus of unstable tRNAs. While stable tRNAs receive only 3'-terminal CCA, unstable tRNAs are marked with CCACCA and rapidly degraded. This is CCA-adding enzyme from Pyrococcus horikoshii (strain ATCC 700860 / DSM 12428 / JCM 9974 / NBRC 100139 / OT-3).